The primary structure comprises 1538 residues: Ferredoxin-dependent glutamate synthase (1538 aa).

C34 acts as the For GATase activity in catalysis. In terms of domain architecture, Glutamine amidotransferase type-2 spans 34 to 431 (CGVGFIADVN…PGQMISVDIF (398 aa)). 1109–1166 (LSEVHQLLAENQLRDRVTLRVDGGLRTGSDIVLAAIMGAEEFGFGTVAMIATGCIMAR) contributes to the FMN binding site. The [3Fe-4S] cluster site is built by C1162, C1168, and C1173.

Belongs to the glutamate synthase family. Monomer. Requires [3Fe-4S] cluster as cofactor. FAD serves as cofactor. It depends on FMN as a cofactor.

The protein resides in the plastid. It localises to the chloroplast stroma. It carries out the reaction 2 oxidized [2Fe-2S]-[ferredoxin] + 2 L-glutamate = L-glutamine + 2 reduced [2Fe-2S]-[ferredoxin] + 2-oxoglutarate + 2 H(+). Its pathway is amino-acid biosynthesis; L-glutamate biosynthesis via GLT pathway; L-glutamate from 2-oxoglutarate and L-glutamine (ferredoxin route): step 1/1. It participates in energy metabolism; nitrogen metabolism. This is Ferredoxin-dependent glutamate synthase (gltB) from Pyropia yezoensis (Susabi-nori).